Consider the following 127-residue polypeptide: MRHYEIVFIVHPDQSEQVPAMIDRYKSIVTARNGQIHRLEDWGRRQLAYPIQKVHKAHYVLMNIECDGEALGELEHAFKFNDAVLRHLTIKMKKAVTTPSPMMKEEKSRSLTPAAGDEGKPAEAAEA.

Residues 96 to 127 (VTTPSPMMKEEKSRSLTPAAGDEGKPAEAAEA) are disordered. The span at 117–127 (DEGKPAEAAEA) shows a compositional bias: basic and acidic residues.

It belongs to the bacterial ribosomal protein bS6 family.

Its function is as follows. Binds together with bS18 to 16S ribosomal RNA. The protein is Small ribosomal subunit protein bS6 of Azoarcus sp. (strain BH72).